We begin with the raw amino-acid sequence, 501 residues long: Cobyric acid synthase (501 aa).

The GATase cobBQ-type domain maps to 251 to 446; the sequence is NIDIAIIRLS…LHGIFDSEEF (196 aa). C332 (nucleophile) is an active-site residue. The active site involves H438.

It belongs to the CobB/CobQ family. CobQ subfamily.

Its pathway is cofactor biosynthesis; adenosylcobalamin biosynthesis. Its function is as follows. Catalyzes amidations at positions B, D, E, and G on adenosylcobyrinic A,C-diamide. NH(2) groups are provided by glutamine, and one molecule of ATP is hydrogenolyzed for each amidation. The polypeptide is Cobyric acid synthase (Clostridium botulinum (strain Alaska E43 / Type E3)).